Here is a 250-residue protein sequence, read N- to C-terminus: uncharacterized protein (250 aa).

Residues 165 to 208 are a coiled coil; sequence HLNLETANTKATEYQKNYQEELKQRQELRQKLLQERTQKMLEAL. The segment covering 201 to 233 has biased composition (basic and acidic residues); the sequence is TQKMLEALHQEETPEQDARDTAKKKTDQEEHTM. The interval 201-250 is disordered; the sequence is TQKMLEALHQEETPEQDARDTAKKKTDQEEHTMRKANAPKTKASGEAPTP.

This is an uncharacterized protein from Treponema pallidum (strain Nichols).